The chain runs to 317 residues: D-alanine--D-alanine ligase (317 aa).

The region spanning 111-308 (KRFWNGIGIP…YASLVEKIAQ (198 aa)) is the ATP-grasp domain. Residue 137 to 192 (EEQMSYPVIVKPSREGSTIGINKAMNRAELDDALIKALEYDSDILVEEFIDGPEFT) participates in ATP binding. Mg(2+) is bound by residues Asp262, Glu275, and Asn277.

Belongs to the D-alanine--D-alanine ligase family. Mg(2+) is required as a cofactor. Requires Mn(2+) as cofactor.

The protein localises to the cytoplasm. It carries out the reaction 2 D-alanine + ATP = D-alanyl-D-alanine + ADP + phosphate + H(+). Its pathway is cell wall biogenesis; peptidoglycan biosynthesis. Cell wall formation. The protein is D-alanine--D-alanine ligase of Marinomonas sp. (strain MWYL1).